The following is a 985-amino-acid chain: Lateral signaling target protein 2 homolog (985 aa).

Disordered regions lie at residues 310 to 453, 498 to 520, 533 to 640, and 747 to 892; these read PLGS…ETDE, EYGAGEQQRQRHRDGQEDEPSTS, LRLP…SSLS, and DNVF…TTTA. Composition is skewed to low complexity over residues 327 to 348, 384 to 393, and 401 to 422; these read HPTTSSNNNNNNGDTTGTTNTH, SLSPNSTPTA, and PSHSIASTSSSATGSTHPPADW. Residues 423 to 453 show a composition bias toward acidic residues; it reads SDGDDEDEEDDDDDIEVEEEELDSTDDETDE. Phosphoserine is present on residues S537 and S538. Basic residues-rich tracts occupy residues 563 to 589 and 596 to 607; these read VYRHRHSHRHHHRHHHHHHQRHHHHQH and HPHRTTRSGRKR. Low complexity-rich tracts occupy residues 629–640 and 761–770; these read ASGDTSAASSLS and NGNQANASAQ. The segment covering 776–785 has biased composition (polar residues); sequence GSIQRNNTVD. S808 is subject to Phosphoserine. Residues 812–866 are compositionally biased toward low complexity; sequence QESASTSTSSSQLHQEQQQLQIQVQRQRNNSVGSNTPSSASSTSSSSEQNSPVSA. Over residues 875 to 885 the composition is skewed to polar residues; that stretch reads QSNNETQMPSS. The FYVE-type zinc-finger motif lies at 904–964; that stretch reads DGKAPRCMSC…VCRECYVREV (61 aa). Zn(2+)-binding residues include C910, C913, C926, C929, C934, C937, C956, and C959.

It belongs to the lst-2 family.

Functionally, negative regulator of epidermal growth factor receptor (EGFR) signaling. This Drosophila ananassae (Fruit fly) protein is Lateral signaling target protein 2 homolog.